Consider the following 293-residue polypeptide: Ribosomal RNA small subunit methyltransferase H (293 aa).

S-adenosyl-L-methionine contacts are provided by residues 34 to 36, aspartate 54, leucine 86, aspartate 101, and glutamine 108; that span reads GGH.

This sequence belongs to the methyltransferase superfamily. RsmH family.

It localises to the cytoplasm. It catalyses the reaction cytidine(1402) in 16S rRNA + S-adenosyl-L-methionine = N(4)-methylcytidine(1402) in 16S rRNA + S-adenosyl-L-homocysteine + H(+). Functionally, specifically methylates the N4 position of cytidine in position 1402 (C1402) of 16S rRNA. The protein is Ribosomal RNA small subunit methyltransferase H of Elusimicrobium minutum (strain Pei191).